The following is a 392-amino-acid chain: Stilbene synthase 3 (392 aa).

55–58 (KFNR) lines the substrate pocket. Cys-164 is an active-site residue. Residues Leu-267 and 305-307 (GGP) each bind substrate.

Belongs to the thiolase-like superfamily. Chalcone/stilbene synthases family. Homodimer.

The protein resides in the cytoplasm. It carries out the reaction 4-coumaroyl-CoA + 3 malonyl-CoA + 3 H(+) = trans-resveratrol + 4 CO2 + 4 CoA. The protein operates within phytoalexin biosynthesis; 3,4',5-trihydroxystilbene biosynthesis; 3,4',5-trihydroxystilbene from trans-4-coumarate: step 2/2. Functionally, mediates resistance to pathogens which are sensitive to stilbenes. This chain is Stilbene synthase 3, found in Vitis vinifera (Grape).